The chain runs to 238 residues: Phosphoribosylaminoimidazole-succinocarboxamide synthase (238 aa).

Belongs to the SAICAR synthetase family.

It catalyses the reaction 5-amino-1-(5-phospho-D-ribosyl)imidazole-4-carboxylate + L-aspartate + ATP = (2S)-2-[5-amino-1-(5-phospho-beta-D-ribosyl)imidazole-4-carboxamido]succinate + ADP + phosphate + 2 H(+). It functions in the pathway purine metabolism; IMP biosynthesis via de novo pathway; 5-amino-1-(5-phospho-D-ribosyl)imidazole-4-carboxamide from 5-amino-1-(5-phospho-D-ribosyl)imidazole-4-carboxylate: step 1/2. This chain is Phosphoribosylaminoimidazole-succinocarboxamide synthase, found in Chlorobium phaeovibrioides (strain DSM 265 / 1930) (Prosthecochloris vibrioformis (strain DSM 265)).